A 274-amino-acid polypeptide reads, in one-letter code: MTRIALGIQYDGAAFSGWQSQPHGNTVQDVLEAALREFAGVALPTTVAGRTDAGVHALGQVVHLDTELVRDPFSWVRGTNAFLPPTVAVRWAQAMPEDFHARFSAHRRTYYYALTYGPTRAPLLEGKAGYVTLPPGQSLDVTAMHEAAQVLVGEHDFSSFRAAECQAKSPVKTMYSTEVRGQGEWVFVRIRGSAFLHHMVRNIMGCLVAIGRGKRPAAWMGEVLAARDRKAAAPTFMPDGLYLAEVGYPDAFRLPASPASSSLFRGVFDEHAGP.

D52 (nucleophile) is an active-site residue. Position 110 (Y110) interacts with substrate.

It belongs to the tRNA pseudouridine synthase TruA family. Homodimer.

The enzyme catalyses uridine(38/39/40) in tRNA = pseudouridine(38/39/40) in tRNA. In terms of biological role, formation of pseudouridine at positions 38, 39 and 40 in the anticodon stem and loop of transfer RNAs. The protein is tRNA pseudouridine synthase A of Ralstonia nicotianae (strain ATCC BAA-1114 / GMI1000) (Ralstonia solanacearum).